A 252-amino-acid polypeptide reads, in one-letter code: ATP synthase subunit a (252 aa).

6 helical membrane passes run 29 to 49 (FTNV…FLFI), 87 to 107 (FFPL…IGLF), 116 to 136 (QIMI…GYGF), 146 to 166 (LFVP…IEVI), 183 to 205 (MLAG…ELGI), and 219 to 239 (VAIT…FTVL).

Belongs to the ATPase A chain family. F-type ATPases have 2 components, CF(1) - the catalytic core - and CF(0) - the membrane proton channel. CF(1) has five subunits: alpha(3), beta(3), gamma(1), delta(1), epsilon(1). CF(0) has three main subunits: a(1), b(2) and c(9-12). The alpha and beta chains form an alternating ring which encloses part of the gamma chain. CF(1) is attached to CF(0) by a central stalk formed by the gamma and epsilon chains, while a peripheral stalk is formed by the delta and b chains.

It localises to the cell inner membrane. Its function is as follows. Key component of the proton channel; it plays a direct role in the translocation of protons across the membrane. The protein is ATP synthase subunit a of Bartonella quintana (strain Toulouse) (Rochalimaea quintana).